Reading from the N-terminus, the 328-residue chain is 3-dehydroquinate synthase (328 aa).

Belongs to the archaeal-type DHQ synthase family.

It carries out the reaction 2-amino-2,3,7-trideoxy-D-lyxo-hept-6-ulosonate + NAD(+) + H2O = 3-dehydroquinate + NH4(+) + NADH + H(+). In terms of biological role, catalyzes the oxidative deamination and cyclization of 2-amino-3,7-dideoxy-D-threo-hept-6-ulosonic acid (ADH) to yield 3-dehydroquinate (DHQ), which is fed into the canonical shikimic pathway of aromatic amino acid biosynthesis. The polypeptide is 3-dehydroquinate synthase (Methanoculleus marisnigri (strain ATCC 35101 / DSM 1498 / JR1)).